A 373-amino-acid chain; its full sequence is Putative glutamate--cysteine ligase 2-2 (373 aa).

The protein belongs to the glutamate--cysteine ligase type 2 family. YbdK subfamily.

It carries out the reaction L-cysteine + L-glutamate + ATP = gamma-L-glutamyl-L-cysteine + ADP + phosphate + H(+). In terms of biological role, ATP-dependent carboxylate-amine ligase which exhibits weak glutamate--cysteine ligase activity. This Legionella pneumophila (strain Corby) protein is Putative glutamate--cysteine ligase 2-2.